A 184-amino-acid polypeptide reads, in one-letter code: Peptide deformylase 2 (184 aa).

Cys110 and His153 together coordinate Fe cation. Residue Glu154 is part of the active site. His157 lines the Fe cation pocket.

This sequence belongs to the polypeptide deformylase family. The cofactor is Fe(2+).

The enzyme catalyses N-terminal N-formyl-L-methionyl-[peptide] + H2O = N-terminal L-methionyl-[peptide] + formate. Removes the formyl group from the N-terminal Met of newly synthesized proteins. Requires at least a dipeptide for an efficient rate of reaction. N-terminal L-methionine is a prerequisite for activity but the enzyme has broad specificity at other positions. This Bacillus anthracis protein is Peptide deformylase 2.